A 225-amino-acid chain; its full sequence is Uridylate kinase (225 aa).

9-10 is an ATP binding site; it reads GS. Gly-46 contacts UMP. ATP contacts are provided by Gly-47 and Arg-51. UMP is bound by residues Asp-67 and 115–121; that span reads THPAHTT. 4 residues coordinate ATP: Thr-141, Asn-142, Tyr-147, and Asp-150.

Belongs to the UMP kinase family. In terms of assembly, homohexamer.

The protein localises to the cytoplasm. It carries out the reaction UMP + ATP = UDP + ADP. Its pathway is pyrimidine metabolism; CTP biosynthesis via de novo pathway; UDP from UMP (UMPK route): step 1/1. With respect to regulation, inhibited by UTP. Functionally, catalyzes the reversible phosphorylation of UMP to UDP. The protein is Uridylate kinase of Methanococcus aeolicus (strain ATCC BAA-1280 / DSM 17508 / OCM 812 / Nankai-3).